A 391-amino-acid chain; its full sequence is Toluene efflux pump periplasmic linker protein TtgG (391 aa).

The signal sequence occupies residues 1–32 (MRAERWSQTVRQIRSPRALRVIPLTALMLISG). Cys-33 is lipidated: N-palmitoyl cysteine. Cys-33 carries S-diacylglycerol cysteine lipidation. The stretch at 107 to 136 (RTYEAQLRRAEANRTSAQNLARRYETLLKT) forms a coiled coil.

This sequence belongs to the membrane fusion protein (MFP) (TC 8.A.1) family.

It localises to the cell inner membrane. Its function is as follows. The periplasmic linker component of an organic solvent efflux pump. Involved in export of a number of organic solvents, including toluene and styrene. This is the most important solvent efflux pump in this strain, although it can export AMP and some antibiotics. The sequence is that of Toluene efflux pump periplasmic linker protein TtgG (ttgG) from Pseudomonas putida (strain DOT-T1E).